Consider the following 83-residue polypeptide: Small ribosomal subunit protein eS21 (83 aa).

Belongs to the eukaryotic ribosomal protein eS21 family. Component of the 40S small ribosomal subunit.

It localises to the cytoplasm. It is found in the cytosol. Its subcellular location is the rough endoplasmic reticulum. Its function is as follows. Component of the small ribosomal subunit. The ribosome is a large ribonucleoprotein complex responsible for the synthesis of proteins in the cell. The sequence is that of Small ribosomal subunit protein eS21 (rps21) from Xenopus tropicalis (Western clawed frog).